Reading from the N-terminus, the 328-residue chain is MTQPVLDIQQLHLSFPGFNGDVHALNNVSLQINRGEIVGLVGESGSGKSVTAMLIMRLLPTGSYCVHRGQISLLGEDVLNAREKQLRQWRGARVAMIFQEPMTALNPTRRIGLQMMDVIRHHQPISRREARAKAIDLLEEMQIPDAVEVMSRYPFELSGGMRQRVMIALAFSCEPQLIIADEPTTALDVTVQLQVLRLLKHKARASGTAVLFISHDMAVVSQLCDSVYVMYAGSVIESGVTADVIHHPRHPYTIGLLQCAPEHGVPRQLLPAIPGTVPNLTHLPDGCAFRDRCYAAGAQCENVPALTACGDNNQRCACWYPQQEVISV.

Residues 6–257 (LDIQQLHLSF…PRHPYTIGLL (252 aa)) form the ABC transporter domain. Residue 42-49 (GESGSGKS) coordinates ATP.

The protein belongs to the ABC transporter superfamily. As to quaternary structure, the complex is composed of two ATP-binding proteins (DdpD and DdpF), two transmembrane proteins (DdpB and DdpC) and a solute-binding protein (DdpA).

The protein localises to the cell inner membrane. Part of the ABC transporter complex DdpABCDF, which is probably involved in D,D-dipeptide transport. Probably responsible for energy coupling to the transport system. The chain is Probable D,D-dipeptide transport ATP-binding protein DdpD from Escherichia coli (strain K12).